Reading from the N-terminus, the 92-residue chain is Small ribosomal subunit protein uS19c (92 aa).

This sequence belongs to the universal ribosomal protein uS19 family.

Its subcellular location is the plastid. The protein resides in the chloroplast. In terms of biological role, protein S19 forms a complex with S13 that binds strongly to the 16S ribosomal RNA. In Chara vulgaris (Common stonewort), this protein is Small ribosomal subunit protein uS19c.